A 1226-amino-acid chain; its full sequence is Methionine synthase (1226 aa).

Residues 6 to 326 form the Hcy-binding domain; it reads RAQIEAQLKQ…EHIRHMAMAV (321 aa). Cys248, Cys311, and Cys312 together coordinate Zn(2+). One can recognise a Pterin-binding domain in the interval 357–618; the sequence is FVNVGERTNV…VPEKLREAVE (262 aa). A B12-binding N-terminal domain is found at 651–745; sequence SALEWRTWSV…FINASKQVGS (95 aa). Residues Glu695, 757–761, His760, Ser805, Thr809, and Ala861 each bind methylcob(III)alamin; that span reads GDVHD. The B12-binding domain maps to 747-882; the sequence is NGKILLATVK…SDELRPAFVE (136 aa). The AdoMet activation domain occupies 898-1226; sequence KKPRTKPVTL…EKWLGPNING (329 aa). Residues Asp948, Arg1136, and 1191-1192 each bind S-adenosyl-L-methionine; that span reads YF.

It belongs to the vitamin-B12 dependent methionine synthase family. Methylcob(III)alamin is required as a cofactor. Zn(2+) serves as cofactor.

It catalyses the reaction (6S)-5-methyl-5,6,7,8-tetrahydrofolate + L-homocysteine = (6S)-5,6,7,8-tetrahydrofolate + L-methionine. It functions in the pathway amino-acid biosynthesis; L-methionine biosynthesis via de novo pathway; L-methionine from L-homocysteine (MetH route): step 1/1. In terms of biological role, catalyzes the transfer of a methyl group from methyl-cobalamin to homocysteine, yielding enzyme-bound cob(I)alamin and methionine. Subsequently, remethylates the cofactor using methyltetrahydrofolate. This chain is Methionine synthase (metH), found in Vibrio vulnificus (strain YJ016).